The primary structure comprises 124 residues: Small ribosomal subunit protein uS12 (124 aa).

Residues 1–24 (MTTINQLVRKPRQATTYKSASPAL) form a disordered region. D89 bears the 3-methylthioaspartic acid mark.

It belongs to the universal ribosomal protein uS12 family. As to quaternary structure, part of the 30S ribosomal subunit. Contacts proteins S8 and S17. May interact with IF1 in the 30S initiation complex.

In terms of biological role, with S4 and S5 plays an important role in translational accuracy. Functionally, interacts with and stabilizes bases of the 16S rRNA that are involved in tRNA selection in the A site and with the mRNA backbone. Located at the interface of the 30S and 50S subunits, it traverses the body of the 30S subunit contacting proteins on the other side and probably holding the rRNA structure together. The combined cluster of proteins S8, S12 and S17 appears to hold together the shoulder and platform of the 30S subunit. The sequence is that of Small ribosomal subunit protein uS12 from Xanthomonas axonopodis pv. citri (strain 306).